The sequence spans 380 residues: MSNTVGQIIKCRAAVAWEAGKPLVIEEVEVAPPQAGEVRLKILFTSLCHTDVYFWEAKGQTPLFPRIFGHEAGGIVESVGEGVTHLKPGDHALPVFTGECGECPHCKSEESNMCDLLRINTDRGVMLNDNKSRFSIKGQPVHHFVGTSTFSEYTVVHAGCVAKINPDAPLDKVCILSCGICTGLGATINVAKPKPGSSVAIFGLGAVGLAAAEGARISGASRIIGVDLVSSRFELAKKFGVNEFVNPKEHDKPVQQVIAEMTNGGVDRAVECTGSIQAMISAFECVHDGWGVAVLVGVPSKDDAFKTHPMNFLNERTLKGTFYGNYKPRTDLPNVVEKYMKGELELEKFITHTVPFSEINKAFDYMLKGESIRCIIKMEE.

Zn(2+)-binding residues include Cys48, Thr50, His70, Cys100, Cys103, Cys106, Cys114, and Cys178. An alcohol is bound by residues Thr50 and His70. Thr50 provides a ligand contact to NAD(+). NAD(+) contacts are provided by residues 203 to 208 (GLGAVG), Asp227, Arg232, Thr273, Val296, 296 to 298 (VGV), and Arg373.

It belongs to the zinc-containing alcohol dehydrogenase family. As to quaternary structure, homodimer. The cofactor is Zn(2+).

The protein localises to the cytoplasm. It catalyses the reaction a primary alcohol + NAD(+) = an aldehyde + NADH + H(+). It carries out the reaction a secondary alcohol + NAD(+) = a ketone + NADH + H(+). This is Alcohol dehydrogenase 1 from Pisum sativum (Garden pea).